Reading from the N-terminus, the 628-residue chain is Otolith matrix protein OMM-64 (628 aa).

The signal sequence occupies residues 1–20; the sequence is MLSRLLIVPLIFALAGLAIS. Residues 43–628 are disordered; that stretch reads KGDKDGGGLT…AAATALAAQS (586 aa). Low complexity predominate over residues 78-93; that stretch reads DSSPDTTDTPDASSSD. The segment covering 182 to 214 has biased composition (polar residues); the sequence is TESPGSDSAESPGSDSAESPGSDSTESPGSDST. 3 stretches are compositionally biased toward basic and acidic residues: residues 246–266, 276–285, and 311–343; these read ETDK…ATDK, ELDGKAHAED, and RPEK…RDSA. N-linked (GlcNAc...) asparagine glycosylation occurs at asparagine 318. Acidic residues-rich tracts occupy residues 449 to 462, 477 to 489, 514 to 536, 544 to 556, and 565 to 578; these read DSQE…EAEP, EPQE…DTDD, DKED…MDKD, DSVD…DAEP, and DEID…PDSE. Over residues 613-628 the composition is skewed to low complexity; it reads ASQAADAAATALAAQS.

As to expression, specifically expressed in otolith matrix-producing cells.

It localises to the secreted. It is found in the extracellular space. Its subcellular location is the extracellular matrix. Functionally, calcium-binding component of otoliths, a calcium carbonate structure of the inner ear involved in hearing and balance sensing. Binds calcium. The protein is Otolith matrix protein OMM-64 of Oncorhynchus mykiss (Rainbow trout).